Here is an 89-residue protein sequence, read N- to C-terminus: Small ribosomal subunit protein uS15 (89 aa).

It belongs to the universal ribosomal protein uS15 family. As to quaternary structure, part of the 30S ribosomal subunit. Forms a bridge to the 50S subunit in the 70S ribosome, contacting the 23S rRNA.

Its function is as follows. One of the primary rRNA binding proteins, it binds directly to 16S rRNA where it helps nucleate assembly of the platform of the 30S subunit by binding and bridging several RNA helices of the 16S rRNA. Forms an intersubunit bridge (bridge B4) with the 23S rRNA of the 50S subunit in the ribosome. The polypeptide is Small ribosomal subunit protein uS15 (Proteus mirabilis (strain HI4320)).